Here is a 546-residue protein sequence, read N- to C-terminus: Oncoprotein-induced transcript 3 protein (546 aa).

Residues 1-16 (MPLSLLLACLFTTVTL) form the signal peptide. Asn89 and Asn116 each carry an N-linked (GlcNAc...) asparagine glycan. The EGF-like; calcium-binding domain occupies 182–222 (DENECEHNNGGCSEICVNLKNSHRCACGVGRVLRSDGKTCE). 3 disulfides stabilise this stretch: Cys186-Cys197, Cys193-Cys206, and Cys208-Cys221. In terms of domain architecture, ZP spans 261 to 516 (TCQVPVLCKS…SRCAQGCHRR (256 aa)). Asn299 is a glycosylation site (N-linked (GlcNAc...) asparagine). Positions 524 to 546 (DEDSAGLQSQTLTGGPISIDWEE) are disordered.

Its subcellular location is the nucleus envelope. In terms of biological role, may be involved in hepatocellular function and development. The protein is Oncoprotein-induced transcript 3 protein (Oit3) of Rattus norvegicus (Rat).